A 465-amino-acid polypeptide reads, in one-letter code: GTPase Der (465 aa).

EngA-type G domains are found at residues 3 to 167 and 179 to 352; these read PLVA…PEEG and VRIA…ASAT. GTP-binding positions include 9–16, 57–61, 119–122, 185–192, 232–236, and 297–300; these read GRPNVGKS, DTGGI, NKID, DTAGL, and NKWD. In terms of domain architecture, KH-like spans 353 to 437; it reads HEFSTSEVNQ…PVCFIFREGA (85 aa).

It belongs to the TRAFAC class TrmE-Era-EngA-EngB-Septin-like GTPase superfamily. EngA (Der) GTPase family. Associates with the 50S ribosomal subunit.

Functionally, GTPase that plays an essential role in the late steps of ribosome biogenesis. The chain is GTPase Der from Xanthomonas oryzae pv. oryzae (strain MAFF 311018).